Reading from the N-terminus, the 876-residue chain is Valine--tRNA ligase (876 aa).

A 'HIGH' region motif is present at residues Pro-44 to His-54. Residues Lys-520–Ser-524 carry the 'KMSKS' region motif. Lys-523 is an ATP binding site. Positions Leu-805 to Ala-876 form a coiled coil.

Belongs to the class-I aminoacyl-tRNA synthetase family. ValS type 1 subfamily. Monomer.

The protein localises to the cytoplasm. The catalysed reaction is tRNA(Val) + L-valine + ATP = L-valyl-tRNA(Val) + AMP + diphosphate. Its function is as follows. Catalyzes the attachment of valine to tRNA(Val). As ValRS can inadvertently accommodate and process structurally similar amino acids such as threonine, to avoid such errors, it has a 'posttransfer' editing activity that hydrolyzes mischarged Thr-tRNA(Val) in a tRNA-dependent manner. This chain is Valine--tRNA ligase, found in Staphylococcus epidermidis (strain ATCC 35984 / DSM 28319 / BCRC 17069 / CCUG 31568 / BM 3577 / RP62A).